Reading from the N-terminus, the 211-residue chain is Transcriptional regulator NarO (211 aa).

The region spanning 154-205 is the HTH bat-type domain; it reads LTARQREVLETAHEMGYFEHPREANATEVAAALDINRSTFTEHLSAAQSKLL.

Activates transcription of the denitrifying genes (nitrate reductase narA and nitrite reductase nirK) under anaerobic conditions. In Haloferax volcanii (strain ATCC 29605 / DSM 3757 / JCM 8879 / NBRC 14742 / NCIMB 2012 / VKM B-1768 / DS2) (Halobacterium volcanii), this protein is Transcriptional regulator NarO.